The chain runs to 385 residues: MKNTRVRSIGTKSLLAAVVTAALMATSAYAAVETDAATTGWATQNGGTTGGAKAAKAVEVKNISDFKKALNGTDSSAKIIKVTGPIDISGGKAYTSFDDQKARSQISIPSNTTIIGVGSNGKFTNGSLVIKGVKNVILRNLYIETPVDVAPHYESGDGWNAEWDAAVIDNSTNVWVDHVTISDGSFTDDKYTTKDGEKYVQHDGALDIKKGSDYVTISYSRFELHDKTILIGHSDSNGSQDSGKLRVTFHNNVFDRVTERAPRVRFGSIHAYNNVYLGDVKHSVYPYLYSFGLGTSGSILSESNSFTLSNLKSIDGKNPECSIVKQFNSKVFSDKGSLVNGSTTTKLDTCGLTAYKPTLPYKYSAQTMTSSLATSINNNAGYGKL.

Residues 1–30 (MKNTRVRSIGTKSLLAAVVTAALMATSAYA) form the signal peptide. Asp164 provides a ligand contact to Ca(2+). Repeat 1 spans residues 177–182 (DHVTIS). Positions 177-218 (DHVTISDGSFTDDKYTTKDGEKYVQHDGALDIKKGSDYVTIS) are 2 X 6 AA approximate repeats. Position 207 (Asp207) interacts with Ca(2+). The stretch at 213–218 (DYVTIS) is repeat 2. Arg260 is a catalytic residue.

This sequence belongs to the polysaccharide lyase 1 family. PLBC subfamily. The cofactor is Ca(2+).

It localises to the secreted. The enzyme catalyses Eliminative cleavage of (1-&gt;4)-alpha-D-galacturonan to give oligosaccharides with 4-deoxy-alpha-D-galact-4-enuronosyl groups at their non-reducing ends.. It participates in glycan metabolism; pectin degradation; 2-dehydro-3-deoxy-D-gluconate from pectin: step 2/5. Its function is as follows. Involved in maceration and soft-rotting of plant tissue. This chain is Pectate lyase E (pelE), found in Dickeya chrysanthemi (Pectobacterium chrysanthemi).